A 331-amino-acid polypeptide reads, in one-letter code: N-arachidonyl glycine receptor (331 aa).

The Extracellular segment spans residues 1–26; it reads MAIPSNRDQLALSNGSHPEEYKIAAL. A glycan (N-linked (GlcNAc...) asparagine) is linked at Asn-14. A helical transmembrane segment spans residues 27–47; it reads VFYSCIFLIGLLVNVTALWVF. At 48–56 the chain is on the cytoplasmic side; that stretch reads SCTTKKRTT. The chain crosses the membrane as a helical span at residues 57–77; that stretch reads VTIYMMNVALLDLVFILSLPF. The Extracellular segment spans residues 78 to 95; that stretch reads RMFYYAKGEWPFGDYFCH. Cys-94 and Cys-172 are joined by a disulfide. The helical transmembrane segment at 96 to 116 threads the bilayer; it reads ILGALVVFYPSLALWLLALIS. Topologically, residues 117–138 are cytoplasmic; it reads ADRYMAIVQPKYAKELKNTGKA. A helical membrane pass occupies residues 139–159; that stretch reads VLACVGVWIMTLTTTVPLLLL. The Extracellular portion of the chain corresponds to 160-191; that stretch reads DEDPDKASSPATCLKISDIIHLKAVNVLNFTR. The N-linked (GlcNAc...) asparagine glycan is linked to Asn-188. A helical membrane pass occupies residues 192–212; it reads LIFFFLIPLFIMIGCYVVIIH. The Cytoplasmic portion of the chain corresponds to 213–236; the sequence is SLLRGQTSKLKPKVKEKSIRIIVT. The helical transmembrane segment at 237–257 threads the bilayer; that stretch reads LLLQVLACFVPFHICFALLML. Over 258–268 the chain is Extracellular; sequence QGEENSYSPWG. Residues 269-289 traverse the membrane as a helical segment; it reads AFTTFLMNLSTCLDVVLYYIV. The Cytoplasmic portion of the chain corresponds to 290–331; sequence SKQFQARVISVMLYRNYLRSVRRKSVRSGSLRSLSNMNSEML. Ser-322 carries the post-translational modification Phosphoserine.

This sequence belongs to the G-protein coupled receptor 1 family. In terms of tissue distribution, expressed in testis, spleen and brain (at protein level).

The protein localises to the cell membrane. Its subcellular location is the cytoplasmic vesicle membrane. Functionally, g protein-coupled receptor (GPCR) that plays a role in diverse physiological processes particularly within the immune and nervous systems. Becomes active when triggered by various endogenous ligands including endocannabinoid N-arachidonyl glycine (NAGly), delta-9-tetrahydrocannabinol or resolvin D2/RvD2 derived from the omega-3 fatty acid docosahexaenoic acid (DHA). Upon RvD2 binding, facilitates the resolution of inflammation, aiding in tissue repair and homeostasis. Mechanistically, RvD2 ligation initiates Galphas protein coupling, activation of cAMP-PKA signaling pathway and phosphorylation of STAT3, leading to RvD2-stimulated macrophage phagocytosis. Mediates NAGly-induced process of reorganization of actin filaments and induction of acrosomal exocytosis. Activation by N-arachidonoyl glycine (NAGly) can also induce apoptosis in macrophages. Plays a role in homeostasis of CD8+ subsets of intraepithelial lymphocytes (IELs) (CD8alphaalpha and CD8alphabeta IELs) in small intestine by supporting preferential migration of CD8alphaalpha T-cells to intraepithelial compartment over lamina propria compartment, and by mediating their reconstitution into small intestine after bone marrow transplant. Participates also in hypotensive responses, mediating reduction in intraocular and blood pressure. This is N-arachidonyl glycine receptor from Rattus norvegicus (Rat).